A 606-amino-acid chain; its full sequence is Vitamin B12 transporter BtuB (606 aa).

Positions 1 to 22 (MQKSLLAIAMASLLTPVSYLHA) are cleaved as a signal peptide. Residues 29–36 (DTVVVTAN) carry the TonB box motif. One can recognise a TBDR plug domain in the interval 41–153 (PLAEVIASTT…IAGVINVITT (113 aa)). One can recognise a TBDR beta-barrel domain in the interval 158–606 (SEGSVVSLGA…RYFANLTYQF (449 aa)). Residues 589–606 (LSYNAPERRYFANLTYQF) carry the TonB C-terminal box motif.

The protein belongs to the TonB-dependent receptor family. BtuB (TC 1.B.14.3.1) subfamily.

It is found in the cell outer membrane. Involved in the active translocation of vitamin B12 (cyanocobalamin) across the outer membrane to the periplasmic space. It derives its energy for transport by interacting with the trans-periplasmic membrane protein TonB. This is Vitamin B12 transporter BtuB from Vibrio vulnificus (strain CMCP6).